Consider the following 93-residue polypeptide: Acylphosphatase (93 aa).

A disulfide bond links C5 and C49. An Acylphosphatase-like domain is found at 5–93 (CIIAWVYGRV…ETLTGFSIRY (89 aa)). N38 is a catalytic residue.

Belongs to the acylphosphatase family.

The catalysed reaction is an acyl phosphate + H2O = a carboxylate + phosphate + H(+). In Salmonella paratyphi A (strain ATCC 9150 / SARB42), this protein is Acylphosphatase.